The following is a 464-amino-acid chain: tRNA modification GTPase MnmE (464 aa).

(6S)-5-formyl-5,6,7,8-tetrahydrofolate-binding residues include arginine 27, glutamate 90, and lysine 129. The region spanning 222–384 (GVALVLAGSV…LYDKIRALIS (163 aa)) is the TrmE-type G domain. GTP-binding positions include 232-237 (NAGKSS), 251-257 (SSYPGTT), and 276-279 (DTAG). Serine 236 and threonine 257 together coordinate Mg(2+). Lysine 464 serves as a coordination point for (6S)-5-formyl-5,6,7,8-tetrahydrofolate.

This sequence belongs to the TRAFAC class TrmE-Era-EngA-EngB-Septin-like GTPase superfamily. TrmE GTPase family. Homodimer. Heterotetramer of two MnmE and two MnmG subunits. K(+) serves as cofactor.

The protein localises to the cytoplasm. Functionally, exhibits a very high intrinsic GTPase hydrolysis rate. Involved in the addition of a carboxymethylaminomethyl (cmnm) group at the wobble position (U34) of certain tRNAs, forming tRNA-cmnm(5)s(2)U34. In Borreliella burgdorferi (strain ATCC 35210 / DSM 4680 / CIP 102532 / B31) (Borrelia burgdorferi), this protein is tRNA modification GTPase MnmE.